The chain runs to 211 residues: Small ribosomal subunit protein uS3 (211 aa).

Residues 38-106 form the KH type-2 domain; sequence LRKFIKKAFY…NIELNIIEVK (69 aa).

It belongs to the universal ribosomal protein uS3 family. Part of the 30S ribosomal subunit. Forms a tight complex with proteins S10 and S14.

In terms of biological role, binds the lower part of the 30S subunit head. Binds mRNA in the 70S ribosome, positioning it for translation. This Ehrlichia canis (strain Jake) protein is Small ribosomal subunit protein uS3.